The sequence spans 678 residues: UvrABC system protein B (678 aa).

In terms of domain architecture, Helicase ATP-binding spans Glu31–Val417. ATP is bound at residue Gly44–Thr51. The Beta-hairpin signature appears at Tyr97–Ile120. The Helicase C-terminal domain occupies Gln436–Ile589. In terms of domain architecture, UVR spans Gln638–His673.

Belongs to the UvrB family. Forms a heterotetramer with UvrA during the search for lesions. Interacts with UvrC in an incision complex.

It is found in the cytoplasm. Its function is as follows. The UvrABC repair system catalyzes the recognition and processing of DNA lesions. A damage recognition complex composed of 2 UvrA and 2 UvrB subunits scans DNA for abnormalities. Upon binding of the UvrA(2)B(2) complex to a putative damaged site, the DNA wraps around one UvrB monomer. DNA wrap is dependent on ATP binding by UvrB and probably causes local melting of the DNA helix, facilitating insertion of UvrB beta-hairpin between the DNA strands. Then UvrB probes one DNA strand for the presence of a lesion. If a lesion is found the UvrA subunits dissociate and the UvrB-DNA preincision complex is formed. This complex is subsequently bound by UvrC and the second UvrB is released. If no lesion is found, the DNA wraps around the other UvrB subunit that will check the other stand for damage. This Pasteurella multocida (strain Pm70) protein is UvrABC system protein B.